A 567-amino-acid polypeptide reads, in one-letter code: Dihydroxy-acid dehydratase (567 aa).

Cys-52 lines the [2Fe-2S] cluster pocket. A Mg(2+)-binding site is contributed by Asp-84. Cys-125 contributes to the [2Fe-2S] cluster binding site. Mg(2+) contacts are provided by Asp-126 and Lys-127. Lys-127 is modified (N6-carboxylysine). Cys-197 lines the [2Fe-2S] cluster pocket. Position 448 (Glu-448) interacts with Mg(2+). Catalysis depends on Ser-474, which acts as the Proton acceptor.

It belongs to the IlvD/Edd family. Homodimer. Requires [2Fe-2S] cluster as cofactor. It depends on Mg(2+) as a cofactor.

The catalysed reaction is (2R)-2,3-dihydroxy-3-methylbutanoate = 3-methyl-2-oxobutanoate + H2O. The enzyme catalyses (2R,3R)-2,3-dihydroxy-3-methylpentanoate = (S)-3-methyl-2-oxopentanoate + H2O. The protein operates within amino-acid biosynthesis; L-isoleucine biosynthesis; L-isoleucine from 2-oxobutanoate: step 3/4. Its pathway is amino-acid biosynthesis; L-valine biosynthesis; L-valine from pyruvate: step 3/4. Functionally, functions in the biosynthesis of branched-chain amino acids. Catalyzes the dehydration of (2R,3R)-2,3-dihydroxy-3-methylpentanoate (2,3-dihydroxy-3-methylvalerate) into 2-oxo-3-methylpentanoate (2-oxo-3-methylvalerate) and of (2R)-2,3-dihydroxy-3-methylbutanoate (2,3-dihydroxyisovalerate) into 2-oxo-3-methylbutanoate (2-oxoisovalerate), the penultimate precursor to L-isoleucine and L-valine, respectively. This is Dihydroxy-acid dehydratase from Streptococcus pneumoniae (strain CGSP14).